The following is a 3344-amino-acid chain: Genome polyprotein (3344 aa).

The Peptidase S30 domain maps to 408-547 (IVGNSKINYI…RSVYAKMDQY (140 aa)). Residues H456, D465, and S499 each act as for P1 proteinase activity in the active site. The Involved in interaction with stylet and aphid transmission signature appears at 598–601 (KITC). Positions 856–858 (PTK) match the Involved in virions binding and aphid transmission motif. Positions 882 to 1004 (MYIAKKGYCY…DSEMKHYIVG (123 aa)) constitute a Peptidase C6 domain. Catalysis depends on for helper component proteinase activity residues C890 and H963. Residues 1473–1625 (EIAHSPEREF…TQFPTKIVTE (153 aa)) enclose the Helicase ATP-binding domain. ATP is bound at residue 1486–1493 (GAVGSGKS). Residues 1575 to 1578 (DECH) carry the DECH box motif. Positions 1644–1803 (DVTAFADNIL…GLPVMTHNVG (160 aa)) constitute a Helicase C-terminal domain. The Nuclear localization signal motif lies at 2134 to 2141 (KKGNKKGK). Y2156 is modified (O-(5'-phospho-RNA)-tyrosine). Residues 2283–2499 (GKSLCQGMRN…LSWGALKVWE (217 aa)) enclose the Peptidase C4 domain. Residues H2327, D2362, and C2431 each act as for nuclear inclusion protein A activity in the active site. The region spanning 2761 to 2885 (WVYCDADGSQ…AIHPDHEHVL (125 aa)) is the RdRp catalytic domain. The segment covering 3059-3093 (KNEAVDAGLNEKLKEKEKQKEKEKEKQKEKEKDGA) has biased composition (basic and acidic residues). The interval 3059-3116 (KNEAVDAGLNEKLKEKEKQKEKEKEKQKEKEKDGASDGNDVSTSTKTGERDRDVNVGT) is disordered.

The protein belongs to the potyviridae genome polyprotein family. In terms of assembly, interacts with host eIF4E protein (via cap-binding region); this interaction mediates the translation of the VPg-viral RNA conjugates. Part of a complex that comprises VPg, RNA, host EIF4E and EIF4G; this interaction mediates the translation of the VPg-viral RNA conjugates. In terms of processing, VPg is uridylylated by the polymerase and is covalently attached to the 5'-end of the genomic RNA. This uridylylated form acts as a nucleotide-peptide primer for the polymerase. Post-translationally, potyviral RNA is expressed as two polyproteins which undergo post-translational proteolytic processing. Genome polyprotein is processed by NIa-pro, P1 and HC-pro proteinases resulting in the production of at least ten individual proteins. P3N-PIPO polyprotein is cleaved by P1 and HC-pro proteinases resulting in the production of three individual proteins. The P1 proteinase and the HC-pro cleave only their respective C-termini autocatalytically. 6K1 is essential for proper proteolytic separation of P3 from CI.

The protein resides in the host cytoplasmic vesicle. It localises to the host nucleus. Its subcellular location is the virion. The enzyme catalyses RNA(n) + a ribonucleoside 5'-triphosphate = RNA(n+1) + diphosphate. It carries out the reaction Hydrolyzes glutaminyl bonds, and activity is further restricted by preferences for the amino acids in P6 - P1' that vary with the species of potyvirus, e.g. Glu-Xaa-Xaa-Tyr-Xaa-Gln-|-(Ser or Gly) for the enzyme from tobacco etch virus. The natural substrate is the viral polyprotein, but other proteins and oligopeptides containing the appropriate consensus sequence are also cleaved.. It catalyses the reaction Hydrolyzes a Gly-|-Gly bond at its own C-terminus, commonly in the sequence -Tyr-Xaa-Val-Gly-|-Gly, in the processing of the potyviral polyprotein.. Its function is as follows. Required for aphid transmission and also has proteolytic activity. Only cleaves a Gly-Gly dipeptide at its own C-terminus. Interacts with virions and aphid stylets. Acts as a suppressor of RNA-mediated gene silencing, also known as post-transcriptional gene silencing (PTGS), a mechanism of plant viral defense that limits the accumulation of viral RNAs. May have RNA-binding activity. Functionally, has helicase activity. It may be involved in replication. In terms of biological role, indispensable for virus replication. Mediates the cap-independent, EIF4E-dependent translation of viral genomic RNAs. Binds to the cap-binding site of host EIF4E and thus interferes with the host EIF4E-dependent mRNA export and translation. VPg-RNA directly binds EIF4E and is a template for transcription. Also forms trimeric complexes with EIF4E-EIF4G, which are templates for translation. Its function is as follows. Has RNA-binding and proteolytic activities. Functionally, an RNA-dependent RNA polymerase that plays an essential role in the virus replication. In terms of biological role, involved in aphid transmission, cell-to-cell and systemis movement, encapsidation of the viral RNA and in the regulation of viral RNA amplification. This Carica papaya (Papaya) protein is Genome polyprotein.